The primary structure comprises 53 residues: ATP synthase protein 8 (53 aa).

The helical transmembrane segment at Trp-9 to Trp-29 threads the bilayer.

Belongs to the ATPase protein 8 family. In terms of assembly, F-type ATPases have 2 components, CF(1) - the catalytic core - and CF(0) - the membrane proton channel.

Its subcellular location is the mitochondrion membrane. In terms of biological role, mitochondrial membrane ATP synthase (F(1)F(0) ATP synthase or Complex V) produces ATP from ADP in the presence of a proton gradient across the membrane which is generated by electron transport complexes of the respiratory chain. F-type ATPases consist of two structural domains, F(1) - containing the extramembraneous catalytic core and F(0) - containing the membrane proton channel, linked together by a central stalk and a peripheral stalk. During catalysis, ATP synthesis in the catalytic domain of F(1) is coupled via a rotary mechanism of the central stalk subunits to proton translocation. Part of the complex F(0) domain. Minor subunit located with subunit a in the membrane. The sequence is that of ATP synthase protein 8 (MT-ATP8) from Lumbricus terrestris (Common earthworm).